A 254-amino-acid chain; its full sequence is Agamous-like MADS-box protein AGL9 homolog (254 aa).

The MADS-box domain occupies 3-57 (RGRVELKRIENKINRQVTFAKRRNGLLKKAYELSVLCDAEVALIIFSNRGKLYEF). Residues 91–181 (ELSSQQEYLK…RLRLADGYQM (91 aa)) enclose the K-box domain.

Its subcellular location is the nucleus. Functionally, probable transcription factor active in inflorescence development and floral organogenesis. This is Agamous-like MADS-box protein AGL9 homolog (AGL9) from Sinapis alba (White mustard).